Here is a 39-residue protein sequence, read N- to C-terminus: SPbeta prophage-derived membrane protein YosA (39 aa).

A helical transmembrane segment spans residues 19 to 39 (SFVLIVVLFILLIIVGATFLY).

Belongs to the SscA family.

The protein localises to the membrane. In Bacillus subtilis (strain 168), this protein is SPbeta prophage-derived membrane protein YosA (yosA).